A 389-amino-acid polypeptide reads, in one-letter code: Chalcone synthase 1A (389 aa).

C164 is a catalytic residue.

This sequence belongs to the thiolase-like superfamily. Chalcone/stilbene synthases family.

The catalysed reaction is (E)-4-coumaroyl-CoA + 3 malonyl-CoA + 3 H(+) = 2',4,4',6'-tetrahydroxychalcone + 3 CO2 + 4 CoA. The protein operates within secondary metabolite biosynthesis; flavonoid biosynthesis. In terms of biological role, the primary product of this enzyme is 4,2',4',6'-tetrahydroxychalcone (also termed naringenin-chalcone or chalcone) which can under specific conditions spontaneously isomerize into naringenin. The protein is Chalcone synthase 1A (CHS1A) of Solanum tuberosum (Potato).